The chain runs to 199 residues: MAFELPNLPYATDALEPHIDKQTMEIHHDKHHNTYVTKLNSAVEGTDLESKSIEEIVANLDSVPEDIQTAVRNNGGGHLNHSLFWELLTPNSEEKGTVVDKIKEQWGSLDEFKKEFADKAAARFGSGWAWLVVNNGQLEIVTTPNQDNPLTEGKTPILGLDVWEHAYYLKYQNKRPDYISAFWNVVNWEKVDELYNATK.

Residues histidine 27, histidine 81, aspartate 161, and histidine 165 each contribute to the Fe(3+) site. 4 residues coordinate Mn(2+): histidine 27, histidine 81, aspartate 161, and histidine 165.

It belongs to the iron/manganese superoxide dismutase family. As to quaternary structure, homodimer. Requires Mn(2+) as cofactor. Fe(3+) serves as cofactor.

It carries out the reaction 2 superoxide + 2 H(+) = H2O2 + O2. Functionally, destroys superoxide anion radicals which are normally produced within the cells and which are toxic to biological systems. Catalyzes the dismutation of superoxide anion radicals into O2 and H2O2 by successive reduction and oxidation of the transition metal ion at the active site. The chain is Superoxide dismutase [Mn/Fe] (sodA) from Staphylococcus haemolyticus (strain JCSC1435).